Here is a 274-residue protein sequence, read N- to C-terminus: 2,3,4,5-tetrahydropyridine-2,6-dicarboxylate N-succinyltransferase (274 aa).

Positions 107 and 144 each coordinate substrate.

It belongs to the transferase hexapeptide repeat family. Homotrimer.

The protein localises to the cytoplasm. The enzyme catalyses (S)-2,3,4,5-tetrahydrodipicolinate + succinyl-CoA + H2O = (S)-2-succinylamino-6-oxoheptanedioate + CoA. It functions in the pathway amino-acid biosynthesis; L-lysine biosynthesis via DAP pathway; LL-2,6-diaminopimelate from (S)-tetrahydrodipicolinate (succinylase route): step 1/3. The sequence is that of 2,3,4,5-tetrahydropyridine-2,6-dicarboxylate N-succinyltransferase from Cereibacter sphaeroides (strain ATCC 17025 / ATH 2.4.3) (Rhodobacter sphaeroides).